Consider the following 246-residue polypeptide: Short chain dehydrogenase/reductase dmxR12 (246 aa).

NADP(+) is bound by residues Ile-15, Ser-34, Lys-125, and Lys-164. Lys-164 serves as the catalytic Lowers pKa of active site Tyr.

The protein belongs to the short-chain dehydrogenases/reductases (SDR) family.

The protein operates within secondary metabolite biosynthesis. Short chain dehydrogenase/reductase; part of the gene cluster that mediates the biosynthesis of the dimeric xanthones cryptosporioptides. The pathway begins with the synthesis of atrochrysone thioester by the polyketide synthase dmx-nrPKS. The atrochrysone carboxyl ACP thioesterase dmxR1 then breaks the thioester bond and releases the atrochrysone carboxylic acid from dmx-nrPKS. Atrochrysone carboxylic acid is decarboxylated by the decarboxylase dmxR15, and oxidized by the anthrone oxygenase dmxR16 to yield emodin. Emodin is then reduced to emodin hydroquinone by the oxidoreductase dmxR7. A-ring reduction by the short chain dehydrogenase dmxR18, dehydration by the scytalone dehydratase-like protein dmxR17 and probable spontaneous re-oxidation, results in overall deoxygenation to chrysophanol. Baeyer-Villiger oxidation by the Baeyer-Villiger monooxygenase (BVMO) dmxR6 then yields monodictylactone in equilibrium with monodictyphenone. In the case of the cryptosporioptides biosynthesis, monodictylactone is reduced at C-12 to an alcohol (by the short chain dehydrogenases dmxR12 or dmxR8) and hydroxylated at C-5 by dmxR9, yielding the electron-rich aromatic which could eliminate H(2)O to form the ortho-quinonemethide, followed by tautomerisation to paraquinone and complete the formal reduction to produce the 10-methylgroup. Conjugate addition of C-4a-OH to the resulting paraquinone by the monooxygenase dmxR10 then gives cyclohexadienone, which is then reduced at C-5 by the short chain dehydrogenase dmxR3 to give the dihydroxanthone. The 6,7-epoxide in the cryptosporioptides could be introduced by the cytochrome P450 monooxygenase dmxL3. The highly reducing PKS dmxL2 manufactures butyrate, which is further carboxylated by dmxL1 to form ethylmalonate. It is not yet clear whether the carboxylation occurs while the butyrate is attached to the ACP of dmxL2, but this unusual fungal metabolite could then be esterified to O-5 by the O-acetyltransferase dmxR13. Finally, dimerization performed by dmxR5 gives the observed dimers cryptosporioptides A, B and C as the final products of the pathway. The polypeptide is Short chain dehydrogenase/reductase dmxR12 (Cryptosporiopsis sp. (strain 8999)).